Here is a 305-residue protein sequence, read N- to C-terminus: uncharacterized protein (305 aa).

The first 29 residues, 1–29 (MSKAVSEILGYMYIFGIVMAVLAIVFVQV), serve as a signal peptide directing secretion.

This is an uncharacterized protein from Archaeoglobus fulgidus (strain ATCC 49558 / DSM 4304 / JCM 9628 / NBRC 100126 / VC-16).